The following is a 197-amino-acid chain: uncharacterized protein (197 aa).

A signal peptide spans M1–A23. Residues N19 and N26 are each glycosylated (N-linked (GlcNAc...) asparagine). Over S24–T61 the chain is Extracellular. Residues L62–F82 form a helical membrane-spanning segment. Residues H83–S197 are Cytoplasmic-facing. The tract at residues M94 to V179 is disordered. Basic and acidic residues-rich tracts occupy residues R96–S107 and H125–R136. The segment covering S147–P161 has biased composition (low complexity). Positions C162–S171 are enriched in pro residues.

It localises to the membrane. This is an uncharacterized protein from Pongo abelii (Sumatran orangutan).